The primary structure comprises 663 residues: MAIPEEFDVIVCGGGSTGCVIAGRLANVDENLKVLLIENGENNLNNPWVYLPGIYPRNMRLDSKTATFYNSRPSKHLNGRRAIVPQANILGGGSSINFMMYTRASASDYDDWESEGWTTDELLPLMKKFETYQRPCNNRDVHGFDGPIKVSFGNYTYPQCQDFLRACETQGIPYVDDLEDLKTSHGAEQWLKWINRDFGRRSDTAHAFIHSTMRNKENLFLMTNTKVDKVIIEDGRAVAVRTVPSKPIGDSKVSRTFKARKQIVVSCGTVSSPMVLQRSGIGEPSKLRAAGVKPIVELPGVGRNFQDHFCYFVPYRIKQDSESFDAFVSGDKEAQKSAFDQWYATGAGPLATNGIEAGVKIRPTEAELATADKAFQQGWESYFENKPDKPLMHYSVISGFFGDHTRLPPGKYMTMFHFLEYPFSRGWLHISSDDPYAAPDFDPGFMNDDRDMWPMVWAFKKSRETARRMECFAGEPTAFHPHYKVDSPARALEQSAEDTKKVAGPLHLTANLYHGSWSTPIGEADKHDPNHVTSSHINVYSKDIQYTKEDDEAIENYIKEHAETTWHCLGTNSMAPREGNKNAPEGGVLDPRLNVHGVKGLKVADLSVCPDNVGCNTFSTALTIGEKAAVLVAEDLGYSGSELDMEVPQHKLKTYEQTGAARY.

8-39 (DVIVCGGGSTGCVIAGRLANVDENLKVLLIEN) is a binding site for FAD. Histidine 567 acts as the Proton acceptor in catalysis. The Microbody targeting signal motif lies at 661-663 (ARY).

Belongs to the GMC oxidoreductase family. As to quaternary structure, homooctamer. The cofactor is FAD.

It localises to the peroxisome matrix. The catalysed reaction is a primary alcohol + O2 = an aldehyde + H2O2. It functions in the pathway energy metabolism; methane degradation. Functionally, catalyzes the oxidation of methanol to formaldehyde and hydrogen peroxide, the first step in the methanol utilization pathway of methylotrophic yeasts. The sequence is that of Alcohol oxidase (AOD1) from Candida boidinii (Yeast).